The sequence spans 91 residues: Large ribosomal subunit protein bL27 (91 aa).

The disordered stretch occupies residues 1 to 21 (MAHKKAGGSSRNGRDSESKRL).

Belongs to the bacterial ribosomal protein bL27 family.

This chain is Large ribosomal subunit protein bL27, found in Azoarcus sp. (strain BH72).